The sequence spans 302 residues: Nodulation protein D 3 (302 aa).

An HTH lysR-type domain is found at Leu6–Thr63. The H-T-H motif DNA-binding region spans Leu23 to Arg42.

This sequence belongs to the LysR transcriptional regulatory family.

Functionally, nodD regulates the expression of the nodABCFE genes which encode other nodulation proteins. NodD is also a negative regulator of its own expression. Binds flavonoids as inducers. This is Nodulation protein D 3 (nodD3) from Rhizobium leguminosarum bv. phaseoli.